The chain runs to 167 residues: Zinc finger CCCH domain-containing protein 3 (167 aa).

The C3H1-type zinc-finger motif lies at 63–91 (AAAIGVCQHFVRTGTCKFGDSCRYFHPKP). The segment covering 89 to 101 (PKPPPANPGPAPS) has biased composition (pro residues). The interval 89–167 (PKPPPANPGP…YPPFPFVDWG (79 aa)) is disordered. The segment covering 108-120 (MAQQSNIQGSQPN) has biased composition (polar residues). Residues 149–167 (SLRPPPEGGYPPFPFVDWG) show a composition bias toward pro residues.

The sequence is that of Zinc finger CCCH domain-containing protein 3 from Oryza sativa subsp. japonica (Rice).